The following is a 317-amino-acid chain: Hps1-dma1 cluster cytochrome P450 monooxygenase cyp3.1 (317 aa).

Residues 183-205 (PAIETDRKTSSHSRSPTALADKQ) are disordered. Cys-260 lines the heme pocket.

It belongs to the cytochrome P450 family. Requires heme as cofactor.

It participates in secondary metabolite biosynthesis. Its function is as follows. Cytochrome P450 monooxygenase; part of the hps1-dma1 gene cluster that probably mediates the biosynthesis a derivative of cyclopiazonic acid (CPA). The hybrid polyketide synthase-nonribosomal peptide synthetase (PKS-NRPS) nps1 might incorporates acetyl-CoA, malonyl-CoA, and tryptophan (Trp) and utilizes a C-terminal redox-incompetent reductase domain to make and release the tryptophan tetramic acid, cyclo-acetoacetyl-L-tryptophan (c-AATrp), as the first intermediate in the pathway. In addition, the cluster also includes the tryptophan dimethylallyltransferase dma1, the FAD-dependent oxidoreductase toxD, the cytochrome P450 monooxygenase cyp3.1 and the methyltransferase DOTSEDRAFT_139328; the latter 2 being not present in all CPA-producing fungi but involved in additional modifications that occur in biosynthesis the of a range of CPA and CPA-like products. Further studies are required to clarify whether the CPA-like hps1-dma1 cluster is functional or a non-functional relic reflecting evolution of D.septosporum. This Dothistroma septosporum (strain NZE10 / CBS 128990) (Red band needle blight fungus) protein is Hps1-dma1 cluster cytochrome P450 monooxygenase cyp3.1 (cyp3.1).